We begin with the raw amino-acid sequence, 392 residues long: MCDFVFRYDSHIENKLSKYIKTTNGKTLLQVSNNKFITIKIGSSYGKKYISVSFNDSICFMNFIVGKRIHCQTNTISNCECCTNYTCYCKYIFQNRCIEHIKIFIAKYLPMIREISNHKFKLIDLIKVDTINNNPTVFNSIKLIKFDTNNDLIFNNDLILLIFEYGFFEDTIDVVKILLDSIQHVTFEFIDTLINIFKKNINGKDRKYFMDKIKSHTFNLSLMDFIKPVLSTDNVDLFYYVIDELTTIVGQIFCDNDTSECDNIDKLDTKFKYDSSKSIKIINHLVSISFYCPKIFKQLLIDINNIDLISDIINKLVFYNYIEYVVIIFDYLGSNIQKFIDEIFLYATSIDMIDLLIDYGADYEKIYRNRKFHKLREDIIVHIKKLIKSNKN.

It belongs to the mimivirus L17x/L18x family.

This is an uncharacterized protein from Acanthamoeba polyphaga (Amoeba).